The chain runs to 168 residues: Zinc-finger homeodomain protein 14 (168 aa).

The ZF-HD dimerization-type; degenerate zinc-finger motif lies at 7 to 51; that stretch reads YRECMRNHAAKLGSYAIDGCREYSQPSTGDLCVACGCHRSYHRRI. Positions 76-103 form a coiled coil; it reads ARLKWKTAEERNEEEEDDTEETSTEEKM. Residues 82–112 are disordered; the sequence is TAEERNEEEEDDTEETSTEEKMTVQRRRKSK. The span at 86–98 shows a compositional bias: acidic residues; that stretch reads RNEEEEDDTEETS. The homeobox DNA-binding region spans 106 to 168; it reads QRRRKSKFTA…WVNNNKKFYH (63 aa).

Homo- and heterodimer with other ZFHD proteins. Interacts with ZHD11. As to expression, mostly expressed in flowers and stems.

The protein resides in the nucleus. Its function is as follows. Putative transcription factor. The sequence is that of Zinc-finger homeodomain protein 14 (ZHD14) from Arabidopsis thaliana (Mouse-ear cress).